We begin with the raw amino-acid sequence, 267 residues long: MNQPLQHAASLLPEDPAALRQLIRAGRYRGHTSGLARGHVQANIVILTRDWAYDFLQFCALNRKACPLIDVTDPGDPVFRNLGRDVDIRTDVPMYRVYRDGNAYHETTGITELWRDDFVAFAIGCSFSFEQALLAANVPLKHINLGRNVAMYRTAIETRPAGRLSGKLVVSMRPLKAADAILATEITARYPDVHGAPVHIGDPRLIGIEDIESPDYGDAVPLDADEIPVFWACGVTPQAVIREARPEICITHAPGCMLVTDLDNNRL.

This sequence belongs to the D-glutamate cyclase family.

The chain is Putative hydro-lyase RALTA_B1245 from Cupriavidus taiwanensis (strain DSM 17343 / BCRC 17206 / CCUG 44338 / CIP 107171 / LMG 19424 / R1) (Ralstonia taiwanensis (strain LMG 19424)).